The chain runs to 837 residues: MKDFVLLNDKILPNDVKCYSCCTTMDLIALVTKDDQIVIHRFLTWQKLFTINHMSTTINDNNTNNNNNNNNNNNNNNNDNNNDNDKSNKSIVSIQWSPNGKMISIGCEDGSIFIYNIENAKLINKSHNHKHPIHKLAWIKEVSQQRSQQQQQQQQQQQQQQQQQQQQQQQQQQQQQQQQQQQQQQNKNGSTKCNNNYVSPPLFLSQIKQNMNLFPSISYYFENSKEENIYLGGDIYDRPFDILICCDSIGVISLLAFGLFKIVTIDLLSLLKQKYSNTHFLIKPSKSLKILDITLTESLNKLSVMIETDNGLFLSVTIDTSILLEKRNEIHEISLQYFLLFQLQQSLDIHIKEITEKWKETQQQLSTKWVEFEKVLSDYGFSSSIEQELIDLLMCGVPSPPTNQFIVNNINIKKLKLTESNCNSIREILIKYILPSFLNIFHIITVLHNNSLENDGYKGLLDTNTVKNILDYCGSFGMRLQSLETLICGIESHYTSFFSWLYKVQCTLNEIQPDRKLSLPFNELSIMSLLKKGLKFDLLFSTSTLFSSSSSSSPSSPPSNNNSPTFSSSSSINNNNNNNNNELNQSGNIGFSNNNENLEFQYKDLKGNFHDLFKDFSSKIFETFNEITIVLPSLFKFENVIPFCLYDKNDTSVSHKFNCSLISHPNDTIYLSIYTTLSNSNRLFICKREDKLNWSFTCYQLNEKYSILDCKFYNNSSLMALVSEDIIKANQKKSTRKNTYLKQYQYKTDDNDDSDNREYIKLDVNIPQSTILLDLLDSFKSREIILKSRISPITFELSTSRKISATFIGKRRVALYDLAEDEEEEEEGEEEDICLVR.

Composition is skewed to low complexity over residues 59–81 (NDNN…NDNN) and 547–581 (SSSS…NNNN). Disordered stretches follow at residues 59 to 89 (NDNN…KSNK) and 547 to 588 (SSSS…QSGN).

It belongs to the APC4 family. The APC/C is composed of at least 13 subunits that stay tightly associated throughout the cell cycle: anapc1, anapc2, anapc3, anapc4, anapc5, anapc6, anapc7, anapc8, anapc10, anapc11, cdc20, cdc26 and cdh1.

The protein resides in the nucleus. It participates in protein modification; protein ubiquitination. In terms of biological role, component of the anaphase promoting complex/cyclosome (APC/C), a cell cycle-regulated E3 ubiquitin-protein ligase complex that controls progression through mitosis and the G1 phase of the cell cycle. The sequence is that of Anaphase-promoting complex subunit 4 (anapc4) from Dictyostelium discoideum (Social amoeba).